The sequence spans 622 residues: Polypeptide N-acetylgalactosaminyltransferase 6 (622 aa).

Residues 1–8 lie on the Cytoplasmic side of the membrane; that stretch reads MRLLRRRH. Residues 9-28 form a helical; Signal-anchor for type II membrane protein membrane-spanning segment; the sequence is MAVRLVMVGSAFVLFLFILQ. Residues 29 to 622 are Lumenal-facing; the sequence is RDVSGREQAT…SDPHQHWLFI (594 aa). Asparagine 86 is a glycosylation site (N-linked (GlcNAc...) asparagine). Residues 103 to 135 are disordered; sequence WERPPQDPNGPGADGKAFQKKEWTPQETQEKEE. Basic and acidic residues predominate over residues 119–135; sequence AFQKKEWTPQETQEKEE. The segment at 176–285 is catalytic subdomain A; the sequence is LPATSVIIVF…HGWLEPLLAR (110 aa). The Mn(2+) site is built by aspartate 269, histidine 271, and histidine 407. Positions 348–410 are catalytic subdomain B; it reads PIKSPTFAGG…PCSVVGHVFR (63 aa). N-linked (GlcNAc...) asparagine glycosylation occurs at asparagine 476. Residues 507–622 enclose the Ricin B-type lectin domain; sequence DHCLDVGENN…SDPHQHWLFI (116 aa). A disulfide bridge links cysteine 509 with cysteine 527. UDP-N-acetyl-alpha-D-galactosamine-binding residues include aspartate 511, glutamate 514, histidine 528, and asparagine 533. Cystine bridges form between cysteine 553-cysteine 566 and cysteine 597-cysteine 610.

Belongs to the glycosyltransferase 2 family. GalNAc-T subfamily. The cofactor is Mn(2+).

It localises to the golgi apparatus membrane. It carries out the reaction L-seryl-[protein] + UDP-N-acetyl-alpha-D-galactosamine = a 3-O-[N-acetyl-alpha-D-galactosaminyl]-L-seryl-[protein] + UDP + H(+). The catalysed reaction is L-threonyl-[protein] + UDP-N-acetyl-alpha-D-galactosamine = a 3-O-[N-acetyl-alpha-D-galactosaminyl]-L-threonyl-[protein] + UDP + H(+). It participates in protein modification; protein glycosylation. In terms of biological role, catalyzes the initial reaction in O-linked oligosaccharide biosynthesis, the transfer of an N-acetyl-D-galactosamine residue to a serine or threonine residue on the protein receptor. May participate in synthesis of oncofetal fibronectin. Has activity toward MUC1A, MUC2, EA2 and fibronectin peptides. The chain is Polypeptide N-acetylgalactosaminyltransferase 6 (GALNT6) from Bos taurus (Bovine).